The sequence spans 244 residues: Cell division protein ZapD (244 aa).

The protein belongs to the ZapD family. As to quaternary structure, interacts with FtsZ.

It is found in the cytoplasm. Functionally, cell division factor that enhances FtsZ-ring assembly. Directly interacts with FtsZ and promotes bundling of FtsZ protofilaments, with a reduction in FtsZ GTPase activity. This chain is Cell division protein ZapD, found in Shewanella sp. (strain MR-7).